Here is an 84-residue protein sequence, read N- to C-terminus: Putative antitoxin VapB37 (84 aa).

Probable antitoxin component of a type II toxin-antitoxin (TA) system. Its putative cognate toxin is VapC37. The chain is Putative antitoxin VapB37 (vapB37) from Mycobacterium tuberculosis (strain CDC 1551 / Oshkosh).